A 557-amino-acid polypeptide reads, in one-letter code: Putative glutathione-regulated potassium-efflux system protein KefB (557 aa).

Helical transmembrane passes span 2–22 (LGYLLAGIAIGPWGLGFISDV), 24–44 (EILHFSELGVVFLMFIIGLEL), 56–76 (IFGVGAAQVLLSAALLAGLLM), 84–104 (AAVVGGIGFAMSSTAMALQLM), 121–141 (VLLFQDLAVIPALALVPLLAG), 146–166 (HFDWMKIGMKVLEFVGMLIGG), 176–196 (FIAASGVREVFTAATLLLVLG), 199–219 (LFMDALGLSMALGTFIAGVLL), 237–257 (GLLLGLFFISVGMSLNLGVLY), and 260–280 (LLWVVISVVVLVAVKILVLYL). Residues 356 to 475 (KPQVIVVGFG…AGVTQFSRET (120 aa)) enclose the RCK N-terminal domain.

It belongs to the monovalent cation:proton antiporter 2 (CPA2) transporter (TC 2.A.37) family. KefB subfamily. As to quaternary structure, interacts with the regulatory subunit KefG.

It localises to the cell inner membrane. In terms of biological role, pore-forming subunit of a potassium efflux system that confers protection against electrophiles. Catalyzes K(+)/H(+) antiport. The sequence is that of Putative glutathione-regulated potassium-efflux system protein KefB from Shigella flexneri.